The following is a 464-amino-acid chain: Soluble pyridine nucleotide transhydrogenase (464 aa).

Position 35-44 (35-44 (DSRRQVGGNC)) interacts with FAD.

Belongs to the class-I pyridine nucleotide-disulfide oxidoreductase family. It depends on FAD as a cofactor.

The protein localises to the cytoplasm. It carries out the reaction NAD(+) + NADPH = NADH + NADP(+). Its function is as follows. Conversion of NADPH, generated by peripheral catabolic pathways, to NADH, which can enter the respiratory chain for energy generation. The chain is Soluble pyridine nucleotide transhydrogenase from Pseudomonas fluorescens (strain ATCC BAA-477 / NRRL B-23932 / Pf-5).